The chain runs to 348 residues: Fe-S cluster assembly protein DRE2 (348 aa).

Residues 1 to 158 (MSQYKTGLLL…LPTFKKASSS (158 aa)) form an N-terminal SAM-like domain region. The disordered stretch occupies residues 137–170 (KTNNTKLQSGSKLPTFKKASSSTSNLPSFKKADH). The segment covering 144–163 (QSGSKLPTFKKASSSTSNLP) has biased composition (polar residues). The segment at 159-242 (TSNLPSFKKA…EEELIDEDGS (84 aa)) is linker. Serine 206 bears the Phosphoserine mark. 4 residues coordinate [2Fe-2S] cluster: cysteine 252, cysteine 263, cysteine 266, and cysteine 268. The tract at residues 252–268 (CGKSKTKKKKACKDCTC) is fe-S binding site A. The [4Fe-4S] cluster site is built by cysteine 311, cysteine 314, cysteine 322, and cysteine 325. Short sequence motifs (cx2C motif) lie at residues 311–314 (CGSC) and 322–325 (CSGC). Positions 311–325 (CGSCSLGDAFRCSGC) are fe-S binding site B.

The protein belongs to the anamorsin family. Monomer. Interacts with TAH18. Interacts with MIA40. The cofactor is [2Fe-2S] cluster. [4Fe-4S] cluster serves as cofactor. In terms of processing, ubiquitinated.

The protein resides in the cytoplasm. The protein localises to the mitochondrion intermembrane space. Functionally, component of the cytosolic iron-sulfur (Fe-S) protein assembly (CIA) machinery required for the maturation of extramitochondrial Fe-S proteins. Part of an electron transfer chain functioning in an early step of cytosolic Fe-S biogenesis, facilitating the de novo assembly of a [4Fe-4S] cluster on the scaffold complex CFD1-NBP35. Electrons are transferred to DRE2 from NADPH via the FAD- and FMN-containing protein TAH18. TAH18-DRE2 are also required for the assembly of the diferric tyrosyl radical cofactor of ribonucleotide reductase (RNR), probably by providing electrons for reduction during radical cofactor maturation in the catalytic small subunit RNR2. Has anti-apoptotic effects in the cell. Involved in negative control of H(2)O(2)-induced cell death. This Saccharomyces cerevisiae (strain ATCC 204508 / S288c) (Baker's yeast) protein is Fe-S cluster assembly protein DRE2.